We begin with the raw amino-acid sequence, 180 residues long: MSESELQLVARRIRSFPDFPIPGVLFRDISPLLKDPDSFRASIRLLAGHLKSTHGGKIDYIAGLDSRGFLFGPSLAQELGVGCVLIRKRGKLPGPTVSASYSLEYGKAELEIQKDALEPGQKVVIVDDLLATGGTMCAACELLSQLRAEVVECVSLVELTSLKGREKLGPVPFFSLLQYE.

Position 2 is an N-acetylserine (Ser-2). Residues Ser-4, Ser-15, and Ser-30 each carry the phosphoserine modification. Tyr-60 bears the Phosphotyrosine mark. Ser-66 carries the post-translational modification Phosphoserine. Lys-114 carries the post-translational modification N6-acetyllysine. Thr-135 is subject to Phosphothreonine.

The protein belongs to the purine/pyrimidine phosphoribosyltransferase family. In terms of assembly, homodimer.

It localises to the cytoplasm. The catalysed reaction is AMP + diphosphate = 5-phospho-alpha-D-ribose 1-diphosphate + adenine. It participates in purine metabolism; AMP biosynthesis via salvage pathway; AMP from adenine: step 1/1. In terms of biological role, catalyzes a salvage reaction resulting in the formation of AMP, that is energically less costly than de novo synthesis. The polypeptide is Adenine phosphoribosyltransferase (Rattus norvegicus (Rat)).